Consider the following 416-residue polypeptide: Enterobactin exporter EntS (416 aa).

At Met-1–Ala-21 the chain is on the cytoplasmic side. A helical membrane pass occupies residues Val-22–Val-42. The Periplasmic segment spans residues Gln-43–Gly-55. Residues Leu-56–Ala-76 form a helical membrane-spanning segment. Residues Asp-77 to Lys-83 lie on the Cytoplasmic side of the membrane. The chain crosses the membrane as a helical span at residues Val-84–Leu-104. Topologically, residues Leu-105–Ser-109 are periplasmic. Residues Leu-110–Ala-130 form a helical membrane-spanning segment. The Cytoplasmic segment spans residues Leu-131–Arg-156. A helical transmembrane segment spans residues Leu-157 to Trp-177. Residue Asn-178 is a topological domain, periplasmic. The helical transmembrane segment at Tyr-179–Leu-199 threads the bilayer. Residues Pro-200 to Arg-218 lie on the Cytoplasmic side of the membrane. Residues Phe-219–Ala-239 traverse the membrane as a helical segment. Topologically, residues Ser-240–Ser-256 are periplasmic. Residues Ala-257–Thr-277 traverse the membrane as a helical segment. Residues Ser-278–Pro-287 are Cytoplasmic-facing. The helical transmembrane segment at Gly-288–Leu-307 threads the bilayer. Residues Met-308–Leu-313 are Periplasmic-facing. A helical transmembrane segment spans residues Gly-314–Leu-336. The Cytoplasmic portion of the chain corresponds to Gln-337 to Asn-356. The chain crosses the membrane as a helical span at residues Val-357–Val-377. Residue Ala-378 is a topological domain, periplasmic. Residues Ser-379–Val-399 traverse the membrane as a helical segment. At Glu-400 to Ser-416 the chain is on the cytoplasmic side.

It belongs to the major facilitator superfamily. EntS (TC 2.A.1.38) family.

The protein resides in the cell inner membrane. Functionally, component of an export pathway for enterobactin. The sequence is that of Enterobactin exporter EntS from Escherichia coli O6:H1 (strain CFT073 / ATCC 700928 / UPEC).